We begin with the raw amino-acid sequence, 447 residues long: MTNPLQVSELVQYVKRELENDSLLQQVQVVGEVSNFKRHSSGHLYFTLKDEQSRMKAVMFARDASRVKTDIRDGARVIITARISVYVASGEMQLYVERMMEDGVGALYEAYVQLKEDVEARGWFEAEQKLPLPAFPQKIGIVTSPKGAALHDIATTLRRRYPQAAIVFAPVLVQGKEAAPQIVRAIEWMNEHQACDVMIIGRGGGSIEELWAFNEMPVVTAIHQSRIPIVSAVGHETDFTIADFVADVRAATPTAAAELVTPEAAELAKRLNELNRRLTRHYAQYITERKDQVQRLATSYGLKSPRVLLGLKQERLDRAEMGLNRIGKQVLQSKQQALTDQVNRFARIAMQERLAEQGRQLVRTRKQLERIHTVLRTKQDRLHQMIARLDSVSPTQVMLRGYTYVEQDGRLVRSVTELSDQTFRVQFHDGSILAKREDEEDGNRTIL.

The protein belongs to the XseA family. Heterooligomer composed of large and small subunits.

The protein resides in the cytoplasm. The catalysed reaction is Exonucleolytic cleavage in either 5'- to 3'- or 3'- to 5'-direction to yield nucleoside 5'-phosphates.. Bidirectionally degrades single-stranded DNA into large acid-insoluble oligonucleotides, which are then degraded further into small acid-soluble oligonucleotides. The polypeptide is Exodeoxyribonuclease 7 large subunit (Exiguobacterium sibiricum (strain DSM 17290 / CCUG 55495 / CIP 109462 / JCM 13490 / 255-15)).